We begin with the raw amino-acid sequence, 70 residues long: DNA-directed RNA polymerase subunit epsilon (70 aa).

This sequence belongs to the RNA polymerase subunit epsilon family. RNAP is composed of a core of 2 alpha, a beta and a beta' subunit. The core is associated with a delta subunit, and at least one of epsilon or omega. When a sigma factor is associated with the core the holoenzyme is formed, which can initiate transcription.

The catalysed reaction is RNA(n) + a ribonucleoside 5'-triphosphate = RNA(n+1) + diphosphate. Its function is as follows. A non-essential component of RNA polymerase (RNAP). The protein is DNA-directed RNA polymerase subunit epsilon of Bacillus cereus (strain ATCC 14579 / DSM 31 / CCUG 7414 / JCM 2152 / NBRC 15305 / NCIMB 9373 / NCTC 2599 / NRRL B-3711).